The following is a 118-amino-acid chain: Large ribosomal subunit protein uL18 (118 aa).

This sequence belongs to the universal ribosomal protein uL18 family. Part of the 50S ribosomal subunit; part of the 5S rRNA/L5/L18/L25 subcomplex. Contacts the 5S and 23S rRNAs.

In terms of biological role, this is one of the proteins that bind and probably mediate the attachment of the 5S RNA into the large ribosomal subunit, where it forms part of the central protuberance. The polypeptide is Large ribosomal subunit protein uL18 (Campylobacter jejuni subsp. jejuni serotype O:6 (strain 81116 / NCTC 11828)).